The chain runs to 311 residues: tRNA dimethylallyltransferase (311 aa).

16–23 (GPTASGKS) serves as a coordination point for ATP. Residue 18–23 (TASGKS) participates in substrate binding. The tract at residues 41 to 44 (DSMQ) is interaction with substrate tRNA.

The protein belongs to the IPP transferase family. Monomer. Mg(2+) serves as cofactor.

The enzyme catalyses adenosine(37) in tRNA + dimethylallyl diphosphate = N(6)-dimethylallyladenosine(37) in tRNA + diphosphate. Its function is as follows. Catalyzes the transfer of a dimethylallyl group onto the adenine at position 37 in tRNAs that read codons beginning with uridine, leading to the formation of N6-(dimethylallyl)adenosine (i(6)A). This is tRNA dimethylallyltransferase from Geobacter sulfurreducens (strain ATCC 51573 / DSM 12127 / PCA).